Consider the following 77-residue polypeptide: Protein RALF-like 17 (77 aa).

Positions 1-29 are cleaved as a signal peptide; the sequence is MAASREFIICCFLTLLLCNFFMRVESGAA. Residues Cys37 and Cys51 are joined by a disulfide bond.

This sequence belongs to the plant rapid alkalinization factor (RALF) family.

It is found in the secreted. Functionally, cell signaling peptide that may regulate plant stress, growth, and development. Mediates a rapid alkalinization of extracellular space by mediating a transient increase in the cytoplasmic Ca(2+) concentration leading to a calcium-dependent signaling events through a cell surface receptor and a concomitant activation of some intracellular mitogen-activated protein kinases. The polypeptide is Protein RALF-like 17 (RALFL17) (Arabidopsis thaliana (Mouse-ear cress)).